The primary structure comprises 223 residues: Ribose-5-phosphate isomerase A (223 aa).

Substrate-binding positions include 28 to 31 (TGTT), 81 to 84 (DSAD), and 94 to 97 (KGGG). The active-site Proton acceptor is the glutamate 103. Lysine 121 contacts substrate.

It belongs to the ribose 5-phosphate isomerase family. In terms of assembly, homodimer.

It carries out the reaction aldehydo-D-ribose 5-phosphate = D-ribulose 5-phosphate. It participates in carbohydrate degradation; pentose phosphate pathway; D-ribose 5-phosphate from D-ribulose 5-phosphate (non-oxidative stage): step 1/1. In terms of biological role, catalyzes the reversible conversion of ribose-5-phosphate to ribulose 5-phosphate. In Buchnera aphidicola subsp. Acyrthosiphon pisum (strain 5A), this protein is Ribose-5-phosphate isomerase A.